The sequence spans 1023 residues: Probable beta-glucosidase E (1023 aa).

Positions 1–51 are disordered; the sequence is MPKSYTPVHDSIPEEDHFSSDDESNFRLHRIDRSASRSQSPKENEGEPSIL. At 1 to 128 the chain is on the cytoplasmic side; that stretch reads MPKSYTPVHD…AVYYSKTWWR (128 aa). Residues 11–45 are compositionally biased toward basic and acidic residues; sequence SIPEEDHFSSDDESNFRLHRIDRSASRSQSPKENE. Residues 129 to 149 form a helical; Signal-anchor for type II membrane protein membrane-spanning segment; sequence TLVVVIIALGLLVWGFLKYAS. The Extracellular portion of the chain corresponds to 150–1023; sequence TRGDIWEEYD…NLPLGKPFDP (874 aa). 2 N-linked (GlcNAc...) asparagine glycosylation sites follow: N199 and N387. The active site involves D415. Residues N458 and N497 are each glycosylated (N-linked (GlcNAc...) asparagine). 2 disordered regions span residues 485 to 515 and 822 to 841; these read WESP…GSPG and NPSR…PSYD. A compositionally biased stretch (low complexity) spans 827 to 838; the sequence is PAARPPDAVAPP. N848 is a glycosylation site (N-linked (GlcNAc...) asparagine). The tract at residues 873–909 is disordered; that stretch reads ATTPPPPNPEASGSATDQKPHRTKPSDAGGGAGGNPS. N-linked (GlcNAc...) asparagine glycosylation is found at N964 and N979.

This sequence belongs to the glycosyl hydrolase 3 family.

It is found in the cell membrane. The enzyme catalyses Hydrolysis of terminal, non-reducing beta-D-glucosyl residues with release of beta-D-glucose.. It participates in glycan metabolism; cellulose degradation. Beta-glucosidases are one of a number of cellulolytic enzymes involved in the degradation of cellulosic biomass. Catalyzes the last step releasing glucose from the inhibitory cellobiose. This is Probable beta-glucosidase E (bglE) from Emericella nidulans (strain FGSC A4 / ATCC 38163 / CBS 112.46 / NRRL 194 / M139) (Aspergillus nidulans).